The following is a 185-amino-acid chain: uncharacterized protein (185 aa).

The region spanning 39–177 (LWHASAGVLV…SWPFVPDSRA (139 aa)) is the Nudix hydrolase domain. Residues 77-99 (GGVVDPGETPQETAIREVGEELG) carry the Nudix box motif. Residues Glu93 and Glu97 each coordinate Mg(2+).

This sequence belongs to the Nudix hydrolase family. Mg(2+) serves as cofactor.

This is an uncharacterized protein from Rhodococcus erythropolis (Arthrobacter picolinophilus).